The following is a 298-amino-acid chain: Aquaporin NIP2-1 (298 aa).

N-linked (GlcNAc...) asparagine glycans are attached at residues asparagine 4, asparagine 13, and asparagine 26. 2 helical membrane passes run 51-71 and 85-105; these read VVSE…AAGI and SIAG…ISGA. The short motif at 108–110 is the NPA 1 element; that stretch reads NPA. 3 helical membrane passes run 124-144, 166-186, and 194-214; these read IQVP…SFVL, SLVV…AVAT, and LAGL…GAIS. Residues 219–221 carry the NPA 2 motif; it reads NPA. Residues 237–257 traverse the membrane as a helical segment; sequence WIYFLGPVMGTLSGAWTYTFI.

It belongs to the MIP/aquaporin (TC 1.A.8) family. NIP (TC 1.A.8.12) subfamily. Mainly expressed in the roots. In roots, it localizes in the main and lateral roots, but not in root hairs. Within a root, it localizes on the plasma membrane of the distal side of both exodermis and endodermis, where casparian strips exist (at protein level). Expressed low levels in leaves and anthers.

It localises to the cell membrane. Silicon influx transporter responsible for silicon transport from the external solution to the root cells. Is coupled with the silicon efflux transporter LSI2 in both exodermal and endodermal root cells for an efficient silicon transport across the cells into the stele. Silicon is beneficial to plant growth and helps plants to overcome abiotic and biotic stresses by preventing lodging (falling over) and increasing resistance to pests and diseases, as well as other stresses. Is coupled with LSI2 transporter in roots for efficient uptake of arsenite, which is further dispatched in shoots and grains. Mediates uptake of methylated arsenic species in roots. The polypeptide is Aquaporin NIP2-1 (Oryza sativa subsp. japonica (Rice)).